A 134-amino-acid chain; its full sequence is ATP synthase epsilon chain (134 aa).

The protein belongs to the ATPase epsilon chain family. F-type ATPases have 2 components, CF(1) - the catalytic core - and CF(0) - the membrane proton channel. CF(1) has five subunits: alpha(3), beta(3), gamma(1), delta(1), epsilon(1). CF(0) has three main subunits: a, b and c.

It is found in the cell inner membrane. Its function is as follows. Produces ATP from ADP in the presence of a proton gradient across the membrane. In Rhizobium meliloti (strain 1021) (Ensifer meliloti), this protein is ATP synthase epsilon chain.